The chain runs to 276 residues: Polyamine aminopropyltransferase (276 aa).

The 234-residue stretch at 3-236 (ELWYTEKQTK…GLWTFTIGSK (234 aa)) folds into the PABS domain. Gln32 provides a ligand contact to S-methyl-5'-thioadenosine. Spermidine is bound by residues His63 and Asp87. Residues Asp107 and 138 to 139 (DG) contribute to the S-methyl-5'-thioadenosine site. Catalysis depends on Asp156, which acts as the Proton acceptor. 156-159 (DSTE) is a binding site for spermidine. Pro163 contacts S-methyl-5'-thioadenosine.

This sequence belongs to the spermidine/spermine synthase family. As to quaternary structure, homodimer or homotetramer.

The protein resides in the cytoplasm. It carries out the reaction S-adenosyl 3-(methylsulfanyl)propylamine + putrescine = S-methyl-5'-thioadenosine + spermidine + H(+). Its pathway is amine and polyamine biosynthesis; spermidine biosynthesis; spermidine from putrescine: step 1/1. Its function is as follows. Involved in the cell growth and proliferation. Catalyzes the irreversible transfer of a propylamine group from the amino donor S-adenosylmethioninamine (decarboxy-AdoMet) to putrescine (1,4-diaminobutane) to yield spermidine. The polypeptide is Polyamine aminopropyltransferase (Bacillus subtilis (strain 168)).